Consider the following 728-residue polypeptide: 1,4-alpha-glucan branching enzyme GlgB (728 aa).

Asp405 serves as the catalytic Nucleophile. Catalysis depends on Glu458, which acts as the Proton donor.

It belongs to the glycosyl hydrolase 13 family. GlgB subfamily. Monomer.

It catalyses the reaction Transfers a segment of a (1-&gt;4)-alpha-D-glucan chain to a primary hydroxy group in a similar glucan chain.. Its pathway is glycan biosynthesis; glycogen biosynthesis. Its function is as follows. Catalyzes the formation of the alpha-1,6-glucosidic linkages in glycogen by scission of a 1,4-alpha-linked oligosaccharide from growing alpha-1,4-glucan chains and the subsequent attachment of the oligosaccharide to the alpha-1,6 position. The chain is 1,4-alpha-glucan branching enzyme GlgB from Shigella flexneri serotype 5b (strain 8401).